A 267-amino-acid chain; its full sequence is Meiosis-specific protein ISC10 (267 aa).

The span at 1-13 shows a compositional bias: basic and acidic residues; it reads MDVDERLHQDENQ. Residues 1–26 are disordered; sequence MDVDERLHQDENQTHPFSQKKSSSFL. Positions 14 to 25 are enriched in polar residues; the sequence is THPFSQKKSSSF.

Functionally, indispensable for spore formation. The protein is Meiosis-specific protein ISC10 (ISC10) of Saccharomyces cerevisiae (strain ATCC 204508 / S288c) (Baker's yeast).